The sequence spans 895 residues: Isoleucine--tRNA ligase (895 aa).

The 'HIGH' region motif lies at 57-67 (PYANGSIHVGH). Glu549 lines the L-isoleucyl-5'-AMP pocket. Residues 590-594 (KMSKS) carry the 'KMSKS' region motif. Residue Lys593 participates in ATP binding. Zn(2+)-binding residues include Cys869, Cys872, Cys888, and Cys891.

Belongs to the class-I aminoacyl-tRNA synthetase family. IleS type 1 subfamily. In terms of assembly, monomer. The cofactor is Zn(2+).

Its subcellular location is the cytoplasm. It catalyses the reaction tRNA(Ile) + L-isoleucine + ATP = L-isoleucyl-tRNA(Ile) + AMP + diphosphate. Its function is as follows. Catalyzes the attachment of isoleucine to tRNA(Ile). As IleRS can inadvertently accommodate and process structurally similar amino acids such as valine, to avoid such errors it has two additional distinct tRNA(Ile)-dependent editing activities. One activity is designated as 'pretransfer' editing and involves the hydrolysis of activated Val-AMP. The other activity is designated 'posttransfer' editing and involves deacylation of mischarged Val-tRNA(Ile). The protein is Isoleucine--tRNA ligase of Mycoplasma genitalium (strain ATCC 33530 / DSM 19775 / NCTC 10195 / G37) (Mycoplasmoides genitalium).